The chain runs to 570 residues: Interleukin-1 receptor accessory protein (570 aa).

Residues 1 to 20 form the signal peptide; the sequence is MTLLWCVVSLYFYGILQSDA. Ig-like C2-type domains are found at residues 21–128, 136–226, and 242–350; these read SERC…VAFP, SCFN…FHLT, and PPVI…VKQK. The Extracellular segment spans residues 21–367; sequence SERCDDWGLD…VELACGFGAT (347 aa). Intrachain disulfides connect cysteine 24/cysteine 122, cysteine 47/cysteine 114, cysteine 137/cysteine 181, cysteine 160/cysteine 212, and cysteine 266/cysteine 332. N-linked (GlcNAc...) asparagine glycosylation is present at asparagine 57. The essential for interaction with PTPRD stretch occupies residues 69–85; the sequence is IWYWTRQDRDLEEPINF. N-linked (GlcNAc...) asparagine glycosylation is found at asparagine 107, asparagine 111, and asparagine 118. Residues asparagine 196, asparagine 209, and asparagine 299 are each glycosylated (N-linked (GlcNAc...) asparagine). The chain crosses the membrane as a helical span at residues 368-388; the sequence is VLLVVILIVVYHVYWLEMVLF. The Cytoplasmic segment spans residues 389 to 570; it reads YRAHFGTDET…GLSYSSLKNV (182 aa). A TIR domain is found at 403–546; the sequence is KEYDIYVSYA…RFWKQLQVAM (144 aa). Glutamate 482 is an active-site residue. Residues 549-570 are disordered; the sequence is KKSPRRSSSDEQGLSYSSLKNV. Serine 557 carries the phosphoserine modification. A compositionally biased stretch (polar residues) spans 558-570; the sequence is DEQGLSYSSLKNV.

It belongs to the interleukin-1 receptor family. As to quaternary structure, the interleukin-36 receptor complex is a heterodimer of IL1RL2 and IL1RAP; the association is inhibited by IL36RN. The interleukin-1 receptor complex is a heterodimer of IL1R1 and IL1RAP. Associates with IL1R2 to form a non-signaling interleukin-1 receptor complex. Interacts with IL-33-bound IL1RL1 to form the minimal interleukin-33 signaling complex with a 1:1:1 stoichiometry. Interacts with KIT (independently of stimulation with KITLG/SCF). A mast cell-specific KITLG/SCF-induced interleukin-33 signaling complex contains IL1RL1, IL1RAP, KIT and MYD88. Interacts (via the first immunoglobilin domain) with PTPRD (via the third immunoglobilin domain); induces pre- and postsynaptic differentiation of neurons.

The protein localises to the cell membrane. It is found in the secreted. It catalyses the reaction NAD(+) + H2O = ADP-D-ribose + nicotinamide + H(+). Its function is as follows. Coreceptor for IL1RL2 in the IL-36 signaling system. Coreceptor with IL1R1 in the IL-1 signaling system. Associates with IL1R1 bound to IL1B to form the high affinity interleukin-1 receptor complex which mediates interleukin-1-dependent activation of NF-kappa-B and other pathways. Signaling involves the recruitment of adapter molecules such as TOLLIP, MYD88, and IRAK1 or IRAK2 via the respective TIR domains of the receptor/coreceptor subunits. Recruits TOLLIP to the signaling complex. Does not bind to interleukin-1 alone; binding of IL1RN to IL1R1, prevents its association with IL1R1 to form a signaling complex. The cellular response is modulated through a non-signaling association with the membrane IL1R2 decoy receptor. Coreceptor for IL1RL1 in the IL-33 signaling system. Can bidirectionally induce pre- and postsynaptic differentiation of neurons by trans-synaptically binding to PTPRD. May play a role in IL1B-mediated costimulation of IFNG production from T-helper 1 (Th1) cells. Functionally, associates with secreted ligand-bound IL1R2 and increases the affinity of secreted IL1R2 for IL1B; this complex formation may be the dominant mechanism for neutralization of IL1B by secreted/soluble receptors. Enhances the ability of secreted IL1R1 to inhibit IL-33 signaling. The chain is Interleukin-1 receptor accessory protein (IL1RAP) from Macaca mulatta (Rhesus macaque).